The primary structure comprises 605 residues: Terpenoid synthase 18 (605 aa).

Residues Asp356, Asp360, Asn500, Thr504, and Glu508 each coordinate Mg(2+). Residues 356 to 360 carry the DDXXD motif motif; that stretch reads DDTYD.

The protein belongs to the terpene synthase family. Tpsa subfamily. Mg(2+) is required as a cofactor. Requires Mn(2+) as cofactor. Predominantly expressed in flowers and siliques but also in roots and leaves.

The protein localises to the cytoplasm. The protein operates within secondary metabolite biosynthesis; terpenoid biosynthesis. This chain is Terpenoid synthase 18 (TPS18), found in Arabidopsis thaliana (Mouse-ear cress).